Consider the following 88-residue polypeptide: MKTVLAFLFLPFIAFTHAESYEDVKEEIKNEAEKEIFEDLEEESDALDSSVREFNDAKPWRFRRAIRRVRWRKVAPYIPFVVKTVGKK.

Residues 1–18 (MKTVLAFLFLPFIAFTHA) form the signal peptide. A propeptide spanning residues 19 to 57 (ESYEDVKEEIKNEAEKEIFEDLEEESDALDSSVREFNDA) is cleaved from the precursor. Valine 85 bears the Valine amide mark.

This sequence belongs to the arminin family. As to expression, expressed in entodermal epithelium along the body column.

It localises to the secreted. The protein resides in the target cell membrane. Functionally, antimicrobial peptide with a broad-spectrum antimicrobial activity. Shows very strong bactericidal activity against B.megaterium (MBC=0.1 uM), E.coli (MBC=0.2 uM), S.aureus (MBC=0.4 uM), methicillin-resistant S.aureus (MRSA) (MBC=0.4-0.8 uM), vancomycin-resistant enterococci (VRE) (E.faecalis (MBC=1.6 uM), and E.faecium (MBC=0.4-0.8 uM)), and extended-spectrum beta-lactamase (ESBL)-producing enterobacteriaceae strains (K.pneumoniae (MBC=0.4-0.8 uM), E.coli (MBC=0.2-0.4 uM)). Keeps its antibacterial activity under a wide range of salt concentrations that mimic physiological conditions of human blood, which is surprising, since Hydra is an obligate freshwater animal with nearly no salt tolerance. Does not affect red blood cells. The chain is Arminin 1a from Hydra vulgaris (Hydra).